Consider the following 35-residue polypeptide: Defensin-B (35 aa).

3 disulfide bridges follow: cysteine 4–cysteine 25, cysteine 10–cysteine 33, and cysteine 14–cysteine 35.

It is found in the secreted. Functionally, has antibacterial activity against M.luteus and E.coli. This Mytilus edulis (Blue mussel) protein is Defensin-B.